We begin with the raw amino-acid sequence, 426 residues long: MSRIKRVHGREVLDSRGNPTVEVEVELESGALGRAIVPSGASTGEREALELRDGDPKRYLGKGVLKAVDNVNGVIAKALVGLEPYNQREIDQILIELDGTENKSKLGANAILGTSMAVARAAANELGIPLYEYLGGKFGYRLPVPLMNVINGGAHADNNLDIQEFMIVPVCGGAFREALRAGVETFHHLKKILKEKGYSTNVGDEGGFAPNLNSSEEALDILMQAIEKAGYKPGEDILLALDVASSEFYENGVYKFEGKERSAEEMIEFYEKLIQKYPIISIEDPMSENDWEGWKEITKRLGDKVQLVGDDLFTTNPKILRKGIEEGVANAILVKLNQIGTVSETLDTVMLAKERNYSAIISHRSGETEDTFISHLAVATNAGQIKTGSASRTDRIAKYNELLRIEERLGNGAVFWGREEFYRFTS.

Gln-163 contributes to the (2R)-2-phosphoglycerate binding site. Glu-205 functions as the Proton donor in the catalytic mechanism. Residues Asp-242, Glu-283, and Asp-310 each contribute to the Mg(2+) site. Residues Lys-335, Arg-364, Ser-365, and Lys-386 each coordinate (2R)-2-phosphoglycerate. The active-site Proton acceptor is Lys-335.

It belongs to the enolase family. Requires Mg(2+) as cofactor.

It is found in the cytoplasm. It localises to the secreted. The protein resides in the cell surface. It carries out the reaction (2R)-2-phosphoglycerate = phosphoenolpyruvate + H2O. It participates in carbohydrate degradation; glycolysis; pyruvate from D-glyceraldehyde 3-phosphate: step 4/5. In terms of biological role, catalyzes the reversible conversion of 2-phosphoglycerate (2-PG) into phosphoenolpyruvate (PEP). It is essential for the degradation of carbohydrates via glycolysis. The protein is Enolase of Aquifex aeolicus (strain VF5).